The chain runs to 373 residues: Spore coat polysaccharide biosynthesis protein SpsE (373 aa).

The AFP-like domain occupies 305-367 (GIFTTAPIQK…GIVWDDILLK (63 aa)).

It functions in the pathway spore coat biogenesis; spore coat polysaccharide biosynthesis. In Bacillus subtilis (strain 168), this protein is Spore coat polysaccharide biosynthesis protein SpsE (spsE).